A 129-amino-acid polypeptide reads, in one-letter code: Beta-galactoside-binding lectin (129 aa).

Ser1 is subject to N-acetylserine. The Galectin domain maps to 4-129; that stretch reads GVVDERMSFK…EARIYSIEIK (126 aa). 69–75 is an a beta-D-galactoside binding site; the sequence is WGTEQRE.

Functionally, this protein binds beta-galactoside. Its physiological function is not yet known. The protein is Beta-galactoside-binding lectin of Electrophorus electricus (Electric eel).